The following is a 456-amino-acid chain: NADH oxidase (456 aa).

Asn-10 contributes to the FAD binding site. His-11 (proton acceptor) is an active-site residue. FAD-binding residues include Ala-12, Asp-34, Gln-35, Cys-44, Val-81, Ala-110, Ser-113, Lys-143, and Tyr-170. Cys-44 (redox-active) is an active-site residue. Residue Cys-44 is modified to Cysteine sulfinic acid (-SO2H). NAD(+)-binding residues include Ile-171, Asp-190, Tyr-199, and Gly-254. Asp-292 contacts FAD. Ala-308 provides a ligand contact to NAD(+). The FAD site is built by Leu-309, Ala-310, and Ser-311. Gly-339 lines the NAD(+) pocket. Phe-436 is a binding site for FAD.

FAD is required as a cofactor.

It catalyses the reaction 2 NADH + O2 + 2 H(+) = 2 NAD(+) + 2 H2O. Its function is as follows. Catalyzes the four-electron reduction of molecular oxygen to water. This Streptococcus pyogenes serotype M6 (strain ATCC BAA-946 / MGAS10394) protein is NADH oxidase.